We begin with the raw amino-acid sequence, 277 residues long: Probable endonuclease 4 (277 aa).

Zn(2+) is bound by residues H70, H108, E145, D178, H181, H212, D225, H227, and E257.

This sequence belongs to the AP endonuclease 2 family. It depends on Zn(2+) as a cofactor.

The catalysed reaction is Endonucleolytic cleavage to 5'-phosphooligonucleotide end-products.. Endonuclease IV plays a role in DNA repair. It cleaves phosphodiester bonds at apurinic or apyrimidinic (AP) sites, generating a 3'-hydroxyl group and a 5'-terminal sugar phosphate. The polypeptide is Probable endonuclease 4 (Mycoplasmopsis pulmonis (strain UAB CTIP) (Mycoplasma pulmonis)).